Here is a 637-residue protein sequence, read N- to C-terminus: Threonine--tRNA ligase (637 aa).

Residues 1–61 (MPNVKLPDGN…KEDCSLIIVT (61 aa)) form the TGS domain. A catalytic region spans residues 242–533 (DHRKLGKALD…LIEHYAGKLP (292 aa)). Zn(2+)-binding residues include Cys333, His384, and His510.

It belongs to the class-II aminoacyl-tRNA synthetase family. Homodimer. Zn(2+) serves as cofactor.

The protein localises to the cytoplasm. The enzyme catalyses tRNA(Thr) + L-threonine + ATP = L-threonyl-tRNA(Thr) + AMP + diphosphate + H(+). Catalyzes the attachment of threonine to tRNA(Thr) in a two-step reaction: L-threonine is first activated by ATP to form Thr-AMP and then transferred to the acceptor end of tRNA(Thr). Also edits incorrectly charged L-seryl-tRNA(Thr). The chain is Threonine--tRNA ligase from Legionella pneumophila (strain Corby).